Reading from the N-terminus, the 232-residue chain is Orotate phosphoribosyltransferase (232 aa).

5-phospho-alpha-D-ribose 1-diphosphate is bound by residues Arg-107, Lys-108, Lys-111, and 133–141; that span reads EDLTTDGGS. Thr-137 serves as a coordination point for orotate.

Belongs to the purine/pyrimidine phosphoribosyltransferase family. PyrE subfamily. Homodimer. Requires Mg(2+) as cofactor.

It catalyses the reaction orotidine 5'-phosphate + diphosphate = orotate + 5-phospho-alpha-D-ribose 1-diphosphate. It functions in the pathway pyrimidine metabolism; UMP biosynthesis via de novo pathway; UMP from orotate: step 1/2. In terms of biological role, catalyzes the transfer of a ribosyl phosphate group from 5-phosphoribose 1-diphosphate to orotate, leading to the formation of orotidine monophosphate (OMP). In Cereibacter sphaeroides (strain ATCC 17023 / DSM 158 / JCM 6121 / CCUG 31486 / LMG 2827 / NBRC 12203 / NCIMB 8253 / ATH 2.4.1.) (Rhodobacter sphaeroides), this protein is Orotate phosphoribosyltransferase.